Here is a 295-residue protein sequence, read N- to C-terminus: 4-hydroxy-tetrahydrodipicolinate synthase (295 aa).

T48 is a pyruvate binding site. Y136 (proton donor/acceptor) is an active-site residue. K164 functions as the Schiff-base intermediate with substrate in the catalytic mechanism. I206 lines the pyruvate pocket.

Belongs to the DapA family. In terms of assembly, homotetramer; dimer of dimers.

It localises to the cytoplasm. It catalyses the reaction L-aspartate 4-semialdehyde + pyruvate = (2S,4S)-4-hydroxy-2,3,4,5-tetrahydrodipicolinate + H2O + H(+). The protein operates within amino-acid biosynthesis; L-lysine biosynthesis via DAP pathway; (S)-tetrahydrodipicolinate from L-aspartate: step 3/4. Its function is as follows. Catalyzes the condensation of (S)-aspartate-beta-semialdehyde [(S)-ASA] and pyruvate to 4-hydroxy-tetrahydrodipicolinate (HTPA). This chain is 4-hydroxy-tetrahydrodipicolinate synthase, found in Actinobacillus pleuropneumoniae serotype 5b (strain L20).